A 355-amino-acid chain; its full sequence is Ubiquinone biosynthesis protein COQ4 homolog, mitochondrial (355 aa).

Zn(2+) contacts are provided by His134, Asp135, His138, and Glu150.

It belongs to the COQ4 family. In terms of assembly, component of a multi-subunit COQ enzyme complex. Requires Zn(2+) as cofactor.

It is found in the mitochondrion inner membrane. It catalyses the reaction a 4-hydroxy-3-methoxy-5-(all-trans-polyprenyl)benzoate + H(+) = a 2-methoxy-6-(all-trans-polyprenyl)phenol + CO2. It participates in cofactor biosynthesis; ubiquinone biosynthesis. Functionally, lyase that catalyzes the C1-decarboxylation of 4-hydroxy-3-methoxy-5-(all-trans-polyprenyl)benzoic acid into 2-methoxy-6-(all-trans-polyprenyl)phenol during ubiquinone biosynthesis. In Plasmodium vivax (strain Salvador I), this protein is Ubiquinone biosynthesis protein COQ4 homolog, mitochondrial.